We begin with the raw amino-acid sequence, 447 residues long: 3-phosphoshikimate 1-carboxyvinyltransferase (447 aa).

Lysine 36, serine 37, and arginine 41 together coordinate 3-phosphoshikimate. Phosphoenolpyruvate is bound at residue lysine 36. The phosphoenolpyruvate site is built by glycine 109 and arginine 138. 3-phosphoshikimate is bound by residues serine 183, glutamine 185, aspartate 333, and lysine 360. Glutamine 185 provides a ligand contact to phosphoenolpyruvate. Residue aspartate 333 is the Proton acceptor of the active site. Phosphoenolpyruvate contacts are provided by arginine 364 and arginine 406.

It belongs to the EPSP synthase family. Monomer.

The protein localises to the cytoplasm. The catalysed reaction is 3-phosphoshikimate + phosphoenolpyruvate = 5-O-(1-carboxyvinyl)-3-phosphoshikimate + phosphate. The protein operates within metabolic intermediate biosynthesis; chorismate biosynthesis; chorismate from D-erythrose 4-phosphate and phosphoenolpyruvate: step 6/7. Functionally, catalyzes the transfer of the enolpyruvyl moiety of phosphoenolpyruvate (PEP) to the 5-hydroxyl of shikimate-3-phosphate (S3P) to produce enolpyruvyl shikimate-3-phosphate and inorganic phosphate. This chain is 3-phosphoshikimate 1-carboxyvinyltransferase, found in Synechocystis sp. (strain ATCC 27184 / PCC 6803 / Kazusa).